Here is a 286-residue protein sequence, read N- to C-terminus: Light-independent protochlorophyllide reductase iron-sulfur ATP-binding protein (286 aa).

Residues 10-15 and Lys-39 contribute to the ATP site; that span reads GIGKST. Position 14 (Ser-14) interacts with Mg(2+). 2 residues coordinate [4Fe-4S] cluster: Cys-95 and Cys-129. 180–181 is a binding site for ATP; sequence NR.

The protein belongs to the NifH/BchL/ChlL family. Homodimer. Protochlorophyllide reductase is composed of three subunits; ChlL, ChlN and ChlB. Requires [4Fe-4S] cluster as cofactor.

It carries out the reaction chlorophyllide a + oxidized 2[4Fe-4S]-[ferredoxin] + 2 ADP + 2 phosphate = protochlorophyllide a + reduced 2[4Fe-4S]-[ferredoxin] + 2 ATP + 2 H2O. The protein operates within porphyrin-containing compound metabolism; chlorophyll biosynthesis (light-independent). Component of the dark-operative protochlorophyllide reductase (DPOR) that uses Mg-ATP and reduced ferredoxin to reduce ring D of protochlorophyllide (Pchlide) to form chlorophyllide a (Chlide). This reaction is light-independent. The L component serves as a unique electron donor to the NB-component of the complex, and binds Mg-ATP. The protein is Light-independent protochlorophyllide reductase iron-sulfur ATP-binding protein of Synechococcus elongatus (strain ATCC 33912 / PCC 7942 / FACHB-805) (Anacystis nidulans R2).